We begin with the raw amino-acid sequence, 101 residues long: Small ribosomal subunit protein uS14 (101 aa).

Belongs to the universal ribosomal protein uS14 family. Part of the 30S ribosomal subunit. Contacts proteins S3 and S10.

Functionally, binds 16S rRNA, required for the assembly of 30S particles and may also be responsible for determining the conformation of the 16S rRNA at the A site. The chain is Small ribosomal subunit protein uS14 from Francisella tularensis subsp. holarctica (strain FTNF002-00 / FTA).